The chain runs to 111 residues: Ribosome-binding factor A (111 aa).

It belongs to the RbfA family. As to quaternary structure, monomer. Binds 30S ribosomal subunits, but not 50S ribosomal subunits or 70S ribosomes.

The protein localises to the cytoplasm. In terms of biological role, one of several proteins that assist in the late maturation steps of the functional core of the 30S ribosomal subunit. Associates with free 30S ribosomal subunits (but not with 30S subunits that are part of 70S ribosomes or polysomes). Required for efficient processing of 16S rRNA. May interact with the 5'-terminal helix region of 16S rRNA. This Helicobacter acinonychis (strain Sheeba) protein is Ribosome-binding factor A.